We begin with the raw amino-acid sequence, 216 residues long: ATP-dependent Clp protease proteolytic subunit (216 aa).

The active-site Nucleophile is the serine 120. Histidine 145 is a catalytic residue.

Belongs to the peptidase S14 family. Fourteen ClpP subunits assemble into 2 heptameric rings which stack back to back to give a disk-like structure with a central cavity, resembling the structure of eukaryotic proteasomes.

The protein resides in the cytoplasm. It catalyses the reaction Hydrolysis of proteins to small peptides in the presence of ATP and magnesium. alpha-casein is the usual test substrate. In the absence of ATP, only oligopeptides shorter than five residues are hydrolyzed (such as succinyl-Leu-Tyr-|-NHMec, and Leu-Tyr-Leu-|-Tyr-Trp, in which cleavage of the -Tyr-|-Leu- and -Tyr-|-Trp bonds also occurs).. Cleaves peptides in various proteins in a process that requires ATP hydrolysis. Has a chymotrypsin-like activity. Plays a major role in the degradation of misfolded proteins. The sequence is that of ATP-dependent Clp protease proteolytic subunit from Cupriavidus metallidurans (strain ATCC 43123 / DSM 2839 / NBRC 102507 / CH34) (Ralstonia metallidurans).